We begin with the raw amino-acid sequence, 904 residues long: MRQGAPARGCRWFVVWALLGLTLGVLVASAAPSSPGTPGVAAATQAANGGPATPAPPALGAAPTGDPKPKKNKKPKNPTPPRPAGDNATVAAGHATLREHLRDIKAENTDANFYVCPPPTGATVVQFEQPRRCPTRPEGQNYTEGIAVVFKENIAPYKFKATMYYKDVTVSQVWFGHRYSQFMGIFEDRAPVPFEEVIDKINAKGVCRSTAKYVRNNLETTAFHRDDHETDMELKPANAATRTSRGWHTTDLKYNPSRVEAFHRYGTTVNCIVEEVDARSVYPYDEFVLATGDFVYMSPFYGYREGSHTEHTSYAADRFKQVDGFYARDLTTKARATAPTTRNLLTTPKFTVAWDWVPKRPSVCTMTKWQEVDEMLRSEYGGSFRFSSDAISTTFTTNLTEYPLSRVDLGDCIGKDARDAMDRIFARRYNATHIKVGQPQYYLANGGFLIAYQPLLSNTLAELYVREHLREQSRKPPNPTPPPPGASANASVERIKTTSSIEFARLQFTYNHIQRHVNDMLGRVAIAWCELQNHELTLWNEARKLNPNAIASATVGRRVSARMLGDVMAVSTCVPVAADNVIVQNSMRISSRPGACYSRPLVSFRYEDQGPLVEGQLGENNELRLTRDAIEPCTVGHRRYFTFGGGYVYFEESAYSHQLSRADITTVSTFIDLNITMLEDHEFVPLEVYTRHEIKDSGLLDYTEVQRRNQLHDLRFADIDTVIHADANAAMFAGLGAFFEGMGDLGRAVGKVVMGIVGGVVSAVSGVSSFMSNPFGALAVGLLVLAGLAAAFFAFRYVMRLQSNPMKALYPLTTKELKNPTNPDASGEGEEGGDFDEAKLAEAREMIRYMALVSAMERTEHKAKKKGTSALLSAKVTDMVMRKRRNTNYTQVPNKDGDADEDDL.

Positions methionine 1–alanine 30 are cleaved as a signal peptide. Over residues alanine 31–glycine 65 the composition is skewed to low complexity. The disordered stretch occupies residues alanine 31–alanine 88. Residues alanine 31–proline 774 are Virion surface-facing. Asparagine 87 and asparagine 141 each carry an N-linked (GlcNAc...) asparagine; by host glycan. 5 disulfides stabilise this stretch: cysteine 116–cysteine 573, cysteine 133–cysteine 529, cysteine 207–cysteine 271, cysteine 364–cysteine 412, and cysteine 596–cysteine 633. Involved in fusion and/or binding to host membrane stretches follow at residues valine 173–tyrosine 179 and arginine 258–tyrosine 265. N-linked (GlcNAc...) asparagine; by host glycans are attached at residues asparagine 398 and asparagine 430. The segment at arginine 470–valine 492 is disordered. Residues proline 476 to glycine 485 are compositionally biased toward pro residues. Asparagine 489 carries N-linked (GlcNAc...) asparagine; by host glycosylation. N-linked (GlcNAc...) asparagine; by host glycosylation occurs at asparagine 674. A hydrophobic membrane proximal region region spans residues isoleucine 719–serine 772. Residues phenylalanine 775 to phenylalanine 795 traverse the membrane as a helical segment. Over arginine 796–leucine 904 the chain is Intravirion. The Golgi targeting motif lies at tyrosine 849–leucine 852. Residues lysine 883–leucine 904 form a disordered region. Positions tyrosine 889–valine 892 match the Internalization motif motif.

Belongs to the herpesviridae glycoprotein B family. As to quaternary structure, homotrimer; disulfide-linked. Interacts with host receptor MYH9/NMMHC-IIA. Interacts with host receptor MYH10/NMMHC-IIB. Binds to heparan sulfate proteoglycans. Interacts with gH/gL heterodimer. Post-translationally, the cytoplasmic tail is phosphorylated by the viral kinase US3. Phosphorylation may be linked to a down-regulation of gB expression on cell surface. Ubiquitinated.

It is found in the virion membrane. The protein resides in the host cell membrane. It localises to the host endosome membrane. Its subcellular location is the host Golgi apparatus membrane. In terms of biological role, envelope glycoprotein that forms spikes at the surface of virion envelope and binds to the host cell entry receptors MYH9/NMMHC-IIA and MYH10/NMMHC-IIB, promoting the virus entry into host cells. Essential for the initial attachment to heparan sulfate moieties of the host cell surface proteoglycans. Involved in fusion of viral and cellular membranes leading to virus entry into the host cell: following initial binding to its host cell entry receptors, membrane fusion is mediated by the fusion machinery composed at least of gB and the heterodimer gH/gL. May be involved in the fusion between the virion envelope and the outer nuclear membrane during virion egress. Also plays a role, together with gK, in virus-induced cell-to-cell fusion (syncytia formation). The protein is Envelope glycoprotein B of Homo sapiens (Human).